A 336-amino-acid chain; its full sequence is MTIRVGINGFGRIGRNYFRALLEQGADIEIVAVNDLGDTATTAHLLKYDTILGRLKAEVSHTEDTITVDGKTIKVLSERNPADIPWGELGVDIVIESTGIFTKKADAEKHIAGGAKKVLISAPAKDEDITIVMGVNQDKYDPANHHVISNASCTTNCVAPMAKVLDENFGIVKGLMTTVHAYTNDQRILDFPHKDLRRARAAAENIIPTTTGAAKATALVLPQLKGKLDGIAMRVPVPTGSATDLVVELQREVTKDEVNAAFKKAADDGDLKGILFYTEDAIVSSDITGDPASCTFDSSLTMVQEGKSVKILGWYDNEWGYSNRLVDLTVFVGNQL.

NAD(+)-binding positions include 12-13 (RI), aspartate 35, arginine 79, and serine 121. D-glyceraldehyde 3-phosphate is bound by residues 152–154 (SCT) and threonine 183. Catalysis depends on cysteine 153, which acts as the Nucleophile. NAD(+) is bound at residue asparagine 184. D-glyceraldehyde 3-phosphate contacts are provided by residues arginine 198, 211–212 (TG), and arginine 234. Asparagine 317 is a binding site for NAD(+).

Belongs to the glyceraldehyde-3-phosphate dehydrogenase family. Homotetramer.

The protein localises to the cytoplasm. It catalyses the reaction D-glyceraldehyde 3-phosphate + phosphate + NAD(+) = (2R)-3-phospho-glyceroyl phosphate + NADH + H(+). The protein operates within carbohydrate degradation; glycolysis; pyruvate from D-glyceraldehyde 3-phosphate: step 1/5. Resistant to pentalenolactone. Catalyzes the oxidative phosphorylation of glyceraldehyde 3-phosphate (G3P) to 1,3-bisphosphoglycerate (BPG) using the cofactor NAD. The first reaction step involves the formation of a hemiacetal intermediate between G3P and a cysteine residue, and this hemiacetal intermediate is then oxidized to a thioester, with concomitant reduction of NAD to NADH. The reduced NADH is then exchanged with the second NAD, and the thioester is attacked by a nucleophilic inorganic phosphate to produce BPG. The polypeptide is Glyceraldehyde-3-phosphate dehydrogenase (gap) (Streptomyces coelicolor (strain ATCC BAA-471 / A3(2) / M145)).